The sequence spans 242 residues: Ribonuclease HII (242 aa).

The RNase H type-2 domain maps to 21 to 234; it reads KIIVGLDEAG…SKNLLKEIEE (214 aa). Positions 27, 28, and 128 each coordinate a divalent metal cation.

It belongs to the RNase HII family. Mn(2+) is required as a cofactor. Mg(2+) serves as cofactor.

It is found in the cytoplasm. The enzyme catalyses Endonucleolytic cleavage to 5'-phosphomonoester.. Endonuclease that specifically degrades the RNA of RNA-DNA hybrids. This chain is Ribonuclease HII, found in Methanococcus maripaludis (strain DSM 14266 / JCM 13030 / NBRC 101832 / S2 / LL).